The primary structure comprises 178 residues: Interleukin-10 (178 aa).

Residues 1-18 (MHSSALLCCLVLLTGVRA) form the signal peptide. 2 disulfides stabilise this stretch: Cys30-Cys126 and Cys80-Cys132. Asn134 carries an N-linked (GlcNAc...) asparagine glycan.

Belongs to the IL-10 family. As to quaternary structure, homodimer. Interacts with IL10RA and IL10RB.

Its subcellular location is the secreted. In terms of biological role, major immune regulatory cytokine that acts on many cells of the immune system where it has profound anti-inflammatory functions, limiting excessive tissue disruption caused by inflammation. Mechanistically, IL10 binds to its heterotetrameric receptor comprising IL10RA and IL10RB leading to JAK1 and STAT2-mediated phosphorylation of STAT3. In turn, STAT3 translocates to the nucleus where it drives expression of anti-inflammatory mediators. Targets antigen-presenting cells (APCs) such as macrophages and monocytes and inhibits their release of pro-inflammatory cytokines including granulocyte-macrophage colony-stimulating factor /GM-CSF, granulocyte colony-stimulating factor/G-CSF, IL-1 alpha, IL-1 beta, IL-6, IL-8 and TNF-alpha. Also interferes with antigen presentation by reducing the expression of MHC-class II and co-stimulatory molecules, thereby inhibiting their ability to induce T cell activation. In addition, controls the inflammatory response of macrophages by reprogramming essential metabolic pathways including mTOR signaling. The sequence is that of Interleukin-10 (IL10) from Macaca mulatta (Rhesus macaque).